We begin with the raw amino-acid sequence, 416 residues long: Adenosylhomocysteinase (416 aa).

3 residues coordinate substrate: Thr55, Asp126, and Glu151. 152–154 (TTT) is a binding site for NAD(+). Residues Lys181 and Asp185 each coordinate substrate. Residues Asn186, 215–220 (GYGWVG), Glu238, Asn273, 294–296 (AGH), and Asn341 each bind NAD(+).

Belongs to the adenosylhomocysteinase family. NAD(+) serves as cofactor.

The protein resides in the cytoplasm. The catalysed reaction is S-adenosyl-L-homocysteine + H2O = L-homocysteine + adenosine. It functions in the pathway amino-acid biosynthesis; L-homocysteine biosynthesis; L-homocysteine from S-adenosyl-L-homocysteine: step 1/1. Its function is as follows. May play a key role in the regulation of the intracellular concentration of adenosylhomocysteine. This chain is Adenosylhomocysteinase, found in Aeropyrum pernix (strain ATCC 700893 / DSM 11879 / JCM 9820 / NBRC 100138 / K1).